A 119-amino-acid polypeptide reads, in one-letter code: Large ribosomal subunit protein bL19 (119 aa).

Belongs to the bacterial ribosomal protein bL19 family.

This protein is located at the 30S-50S ribosomal subunit interface and may play a role in the structure and function of the aminoacyl-tRNA binding site. This Mycoplasma pneumoniae (strain ATCC 29342 / M129 / Subtype 1) (Mycoplasmoides pneumoniae) protein is Large ribosomal subunit protein bL19 (rplS).